We begin with the raw amino-acid sequence, 153 residues long: MALGALKSDSYVELSQYRDQHFRGNRSDQECLLKHSCTLYVGNLSFYTTEEQIHELFSKSGDVKKIVMGLDKIKKTACGFCFVEYYTRTDAEQAMRFINGTRLDDRIIRTDWDAGFKEGRQYGRGKSGGQVRDEYRQDYDAGRGGYGKIVQSI.

MRNA contacts are provided by residues tyrosine 17, tyrosine 40, 109 to 113 (RTDWD), 120 to 124 (RQYGR), and 130 to 131 (QV). Residues 37-115 (CTLYVGNLSF…RIIRTDWDAG (79 aa)) enclose the RRM domain.

This sequence belongs to the RRM NCBP2 family. As to quaternary structure, component of the nuclear cap-binding complex (CBC), a heterodimer composed of ncbp1/cbp80 and ncbp2/cbp20 that interacts with m7GpppG-capped RNA.

It is found in the nucleus. The protein resides in the cytoplasm. Component of the cap-binding complex (CBC), which binds co-transcriptionally to the 5' cap of pre-mRNAs and is involved in various processes such as pre-mRNA splicing, translation regulation, nonsense-mediated mRNA decay, RNA-mediated gene silencing (RNAi) by microRNAs (miRNAs) and mRNA export. The CBC complex is involved in mRNA export from the nucleus, leading to the recruitment of the mRNA export machinery to the 5' end of mRNA and to mRNA export in a 5' to 3' direction through the nuclear pore. The CBC complex is also involved in mediating U snRNA and intronless mRNAs export from the nucleus. The CBC complex is essential for a pioneer round of mRNA translation, before steady state translation when the CBC complex is replaced by cytoplasmic cap-binding protein eIF4E. The pioneer round of mRNA translation mediated by the CBC complex plays a central role in nonsense-mediated mRNA decay (NMD), NMD only taking place in mRNAs bound to the CBC complex, but not on eIF4E-bound mRNAs. The CBC complex enhances NMD in mRNAs containing at least one exon-junction complex (EJC), promoting the interaction between upf1 and upf2. The CBC complex is also involved in 'failsafe' NMD, which is independent of the EJC complex, while it does not participate in Staufen-mediated mRNA decay (SMD). During cell proliferation, the CBC complex is also involved in microRNAs (miRNAs) biogenesis via its interaction with srrt/ars2, thereby being required for miRNA-mediated RNA interference. The CBC complex also acts as a negative regulator of parn, thereby acting as an inhibitor of mRNA deadenylation. In the CBC complex, ncbp2/cbp20 recognizes and binds capped RNAs (m7GpppG-capped RNA) but requires ncbp1/cbp80 to stabilize the movement of its N-terminal loop and lock the CBC into a high affinity cap-binding state with the cap structure. The conventional cap-binding complex with NCBP2 binds both small nuclear RNA (snRNA) and messenger (mRNA) and is involved in their export from the nucleus. This is Nuclear cap-binding protein subunit 2 (ncbp2) from Xenopus tropicalis (Western clawed frog).